Consider the following 259-residue polypeptide: Imidazole glycerol phosphate synthase subunit HisF (259 aa).

Catalysis depends on residues aspartate 11 and aspartate 130.

The protein belongs to the HisA/HisF family. Heterodimer of HisH and HisF.

Its subcellular location is the cytoplasm. The enzyme catalyses 5-[(5-phospho-1-deoxy-D-ribulos-1-ylimino)methylamino]-1-(5-phospho-beta-D-ribosyl)imidazole-4-carboxamide + L-glutamine = D-erythro-1-(imidazol-4-yl)glycerol 3-phosphate + 5-amino-1-(5-phospho-beta-D-ribosyl)imidazole-4-carboxamide + L-glutamate + H(+). Its pathway is amino-acid biosynthesis; L-histidine biosynthesis; L-histidine from 5-phospho-alpha-D-ribose 1-diphosphate: step 5/9. IGPS catalyzes the conversion of PRFAR and glutamine to IGP, AICAR and glutamate. The HisF subunit catalyzes the cyclization activity that produces IGP and AICAR from PRFAR using the ammonia provided by the HisH subunit. The polypeptide is Imidazole glycerol phosphate synthase subunit HisF (Chloroflexus aurantiacus (strain ATCC 29366 / DSM 635 / J-10-fl)).